A 632-amino-acid polypeptide reads, in one-letter code: MTHEFTESYDVIVIGAGHAGVEASLATSRMGCKTLLATINLDMLAFMPCNPSIGGSAKGIVVREIDALGGEMGKNIDKTYIQMKMLNTGKGPAVRALRAQADKSLYAREMKHTVEKQANLTLRQTMIDDILVEDGRVVGVLTATGQKFAAKAVVVTTGTALRGEIILGELKYSSGPNNSLASVTLADNLKKLGLEIGRFKTGTPPRVKASSINYDQTEIQPGDDKPNHFSFMSKDADYLKDQIPCWLTYTNQTSHDIINQNLYRAPMFSGIVKGVGPRYCPSIEDKIVRFADKERHQLFLEPEGRDTEEVYVQGLSTSLPEDVQKDLIHSIKGLEKAEMMRTGYAIEYDIVLPHQLRATLETKLISGLFTAGQTNGTSGYEEAAGQGLIAGINAALKVQGKSELILKRSDAYIGVMIDDLVTKGTLEPYRLLTSRAEYRLILRHDNADMRLTEIGRDIGLVDDERWKAFEIKKNQFDNELKRLNSIKLKPVKATNDRVQELGFKPLTDAMIAKEFMRRPEIDYATAVSFVGPAAEDLDAKIIELLETEIKYEGYIRKALDQVAKMKRMEEKRIPANIDWDAIDSIATEARQKFKKINPETIGQASRISGVNPADISILMIYLEGNGKAHRKY.

FAD contacts are provided by residues 15–20 (GAGHAG), Ile127, and Ser182. Residue 276–290 (GPRYCPSIEDKIVRF) participates in NAD(+) binding. Gln373 is a binding site for FAD.

The protein belongs to the MnmG family. In terms of assembly, homodimer. Heterotetramer of two MnmE and two MnmG subunits. Requires FAD as cofactor.

The protein resides in the cytoplasm. In terms of biological role, NAD-binding protein involved in the addition of a carboxymethylaminomethyl (cmnm) group at the wobble position (U34) of certain tRNAs, forming tRNA-cmnm(5)s(2)U34. The protein is tRNA uridine 5-carboxymethylaminomethyl modification enzyme MnmG of Streptococcus pyogenes serotype M6 (strain ATCC BAA-946 / MGAS10394).